The sequence spans 270 residues: 4-hydroxy-4-methyl-2-oxoglutarate aldolase tasA (270 aa).

Catalysis depends on His49, which acts as the Proton acceptor. 2 residues coordinate a divalent metal cation: Glu156 and Asp182. Asp182 is a binding site for substrate.

It belongs to the HpcH/HpaI aldolase family. Homohexamer; trimer of dimers. Requires Co(2+) as cofactor. Mn(2+) serves as cofactor. Zn(2+) is required as a cofactor. The cofactor is Fe(2+). It depends on Mg(2+) as a cofactor.

The catalysed reaction is 4-hydroxy-4-methyl-2-oxoglutarate = 2 pyruvate. It functions in the pathway secondary metabolite biosynthesis. Functionally, 4-hydroxy-4-methyl-2-oxoglutarate aldolase; part of the gene cluster that mediates the biosynthesis of the tetramic acids Sch210971 and Sch210972, potential anti-HIV fungal natural product that contain a decalin core. The PKS module of tasS together with the enoylreductase tasC catalyze the formation of the polyketide unit which is then conjugated to 4-hydroxyl-4-methyl glutamate (HMG) by the condensation domain of the tasS NRPS module. One unique structural feature of Sch210971 and Sch210972 is the tetramic acid motif proposed to be derived from the non-proteinogenic amino acid HMG, by a Dieckmann-type condensation catalyzed by the reductase domain of tasS. The aldolase tasA catalyzes the aldol condensation of 2 molecules of pyruvic acid to yield the intermediate 4-hydroxyl-4-methyl-2-oxoglutarate (HMOG), which can then be stereoselectively transaminated, may be by tasG, to form HMG. The Diels-Alderase tas3 then uses the Dieckmann product of tasS as substrate and catalyzes the Diels-Alder cycloaddition to form the decalin ring of Sch210971 and Sch210972. This chain is 4-hydroxy-4-methyl-2-oxoglutarate aldolase tasA, found in Hapsidospora irregularis.